Reading from the N-terminus, the 281-residue chain is tRNA uridine(34) hydroxylase (281 aa).

Residues Ser-121 to Gly-214 enclose the Rhodanese domain. Residue Cys-174 is the Cysteine persulfide intermediate of the active site.

The protein belongs to the TrhO family.

It catalyses the reaction uridine(34) in tRNA + AH2 + O2 = 5-hydroxyuridine(34) in tRNA + A + H2O. Its function is as follows. Catalyzes oxygen-dependent 5-hydroxyuridine (ho5U) modification at position 34 in tRNAs. The chain is tRNA uridine(34) hydroxylase from Wolbachia pipientis subsp. Culex pipiens (strain wPip).